The following is a 122-amino-acid chain: Autophagy-related protein 8b (122 aa).

A lipid anchor (Phosphatidylethanolamine amidated glycine) is attached at Gly117. A propeptide spans 118–122 (GSFYC) (removed in mature form).

This sequence belongs to the ATG8 family. As to quaternary structure, interacts with ATG4. Interacts with NBR1. The C-terminal 5 residues are removed by ATG4 to expose Gly-117 at the C-terminus. This Gly-117 forms then a thioester bond with the 'Cys-558' of ATG7 (E1-like activating enzyme) before being transferred to the 'Cys-258' of ATG3 (the specific E2 conjugating enzyme), in order to be finally amidated with phosphatidylethanolamine. This lipid modification anchors ATG8 to autophagosomes. As to expression, constitutively expressed.

The protein localises to the cytoplasmic vesicle. It is found in the autophagosome membrane. It localises to the vacuole membrane. The protein resides in the cytoplasm. Its subcellular location is the cytoskeleton. In terms of biological role, ubiquitin-like modifier involved in autophagosomes formation. May mediate the delivery of the autophagosomes to the vacuole via the microtubule cytoskeleton. In Arabidopsis thaliana (Mouse-ear cress), this protein is Autophagy-related protein 8b (ATG8B).